The chain runs to 124 residues: Late histone H2B.2.1 (124 aa).

The interval 1–32 (MPAKQTSGKGAKKAGKAKGRPAGASKTRRRKR) is disordered. Basic residues predominate over residues 10–19 (GAKKAGKAKG). An O-linked (GlcNAc) serine glycan is attached at Ser111. Residue Lys119 forms a Glycyl lysine isopeptide (Lys-Gly) (interchain with G-Cter in ubiquitin) linkage.

It belongs to the histone H2B family. As to quaternary structure, the nucleosome is a histone octamer containing two molecules each of H2A, H2B, H3 and H4 assembled in one H3-H4 heterotetramer and two H2A-H2B heterodimers. The octamer wraps approximately 147 bp of DNA. Monoubiquitination of Lys-119 gives a specific tag for epigenetic transcriptional activation and is also prerequisite for histone H3 'Lys-4' and 'Lys-79' methylation. Post-translationally, glcNAcylation at Ser-111 promotes monoubiquitination of Lys-119. It fluctuates in response to extracellular glucose, and associates with transcribed genes.

The protein localises to the nucleus. The protein resides in the chromosome. Functionally, core component of nucleosome. Nucleosomes wrap and compact DNA into chromatin, limiting DNA accessibility to the cellular machineries which require DNA as a template. Histones thereby play a central role in transcription regulation, DNA repair, DNA replication and chromosomal stability. DNA accessibility is regulated via a complex set of post-translational modifications of histones, also called histone code, and nucleosome remodeling. In Psammechinus miliaris (Green sea urchin), this protein is Late histone H2B.2.1.